An 843-amino-acid polypeptide reads, in one-letter code: Structure-specific endonuclease subunit SLX4 (843 aa).

5 disordered regions span residues Ser26 to Thr111, Ala281 to Lys313, Asn339 to Pro377, Ser603 to Leu655, and Ala729 to Glu748. Polar residues-rich tracts occupy residues Ala50–Asn69 and Pro285–Gln301. A compositionally biased stretch (basic residues) spans Gln302–Lys311. Polar residues-rich tracts occupy residues Asn349 to Asn372 and Ser603 to Thr616. The segment covering Asp617–Pro636 has biased composition (basic and acidic residues). A compositionally biased stretch (low complexity) spans Arg739–Glu748.

It belongs to the SLX4 family. In terms of assembly, forms a heterodimer with SLX1. Phosphorylated in response to DNA damage.

It is found in the nucleus. In terms of biological role, regulatory subunit of the SLX1-SLX4 structure-specific endonuclease that resolves DNA secondary structures generated during DNA repair and recombination. Has endonuclease activity towards branched DNA substrates, introducing single-strand cuts in duplex DNA close to junctions with ss-DNA. The protein is Structure-specific endonuclease subunit SLX4 of Ajellomyces capsulatus (strain G186AR / H82 / ATCC MYA-2454 / RMSCC 2432) (Darling's disease fungus).